A 275-amino-acid polypeptide reads, in one-letter code: Taurine transport system permease protein TauC (275 aa).

The next 7 membrane-spanning stretches (helical) occupy residues 20–42 (LSRQ…WTVA), 87–107 (IMLA…AMGL), 124–144 (PVPP…GETS), 146–166 (ILLI…AGVK), 186–206 (VLWF…LRIG), 209–229 (VGWS…LGFM), and 236–256 (FLAT…AFLL). Positions 80–264 (LAASLTRIML…LLELGLRALQ (185 aa)) constitute an ABC transmembrane type-1 domain.

This sequence belongs to the binding-protein-dependent transport system permease family. CysTW subfamily.

Its subcellular location is the cell inner membrane. Functionally, part of a binding-protein-dependent transport system for taurine. Probably responsible for the translocation of the substrate across the membrane. The sequence is that of Taurine transport system permease protein TauC (tauC) from Escherichia coli (strain K12).